A 342-amino-acid polypeptide reads, in one-letter code: Uroporphyrinogen decarboxylase (342 aa).

Residues 21–25 (RQAGR), aspartate 71, tyrosine 148, serine 203, and histidine 316 contribute to the substrate site.

The protein belongs to the uroporphyrinogen decarboxylase family. Homodimer.

Its subcellular location is the cytoplasm. The catalysed reaction is uroporphyrinogen III + 4 H(+) = coproporphyrinogen III + 4 CO2. The protein operates within porphyrin-containing compound metabolism; protoporphyrin-IX biosynthesis; coproporphyrinogen-III from 5-aminolevulinate: step 4/4. In terms of biological role, catalyzes the decarboxylation of four acetate groups of uroporphyrinogen-III to yield coproporphyrinogen-III. The chain is Uroporphyrinogen decarboxylase from Campylobacter curvus (strain 525.92).